The chain runs to 142 residues: Domesticated amidase effector 2 (142 aa).

The N-terminal stretch at 1–35 is a signal peptide; that stretch reads MKLFLISAALVVLGLAAVADAIGCSDPSPFQGRWV. Catalysis depends on residues Cys-43 and His-94.

It belongs to the cell wall amidase Dae2/Tae2-like family. May be post-translationally modified, since the saliva wild-type protein is slightly heavier than the recombinant one. In terms of tissue distribution, detected in salivary glands and in the gut (at protein level).

The protein localises to the secreted. Tick gut and saliva antibacterial peptide that directly antagonizes host skin commensals which enter the ticks during feeding. Acts as a cell wall hydrolase that cleaves the bond between gamma-D-glutamate-meso-diaminopimelate of a peptide stem and D-alanine of another peptide stem in peptidoglycans. In vitro, degrades peptidoglycans from both Gram-negative and Gram-positive bacteria. Is not able to traverse the protective outer membrane of Gram-negative bacteria. Is not able to kill Borrelia burgdorferi, one of the Lyme disease-causing bacteria. This Ixodes scapularis (Black-legged tick) protein is Domesticated amidase effector 2.